Reading from the N-terminus, the 418-residue chain is AP-3 complex subunit mu-2 (418 aa).

One can recognise an MHD domain in the interval 176-417 (NNEAYFDVIE…MTKAGKFQVR (242 aa)).

This sequence belongs to the adaptor complexes medium subunit family. As to quaternary structure, AP-3 associates with the BLOC-1 complex. Adaptor protein complex 3 (AP-3) is a heterotetramer composed of two large adaptins (delta-type subunit AP3D1 and beta-type subunit AP3B1 or AP3B2), a medium adaptin (mu-type subunit AP3M1 or AP3M2) and a small adaptin (sigma-type subunit APS1 or AP3S2).

Its subcellular location is the golgi apparatus. It is found in the cytoplasmic vesicle membrane. In terms of biological role, part of the AP-3 complex, an adaptor-related complex which is not clathrin-associated. The complex is associated with the Golgi region as well as more peripheral structures. It facilitates the budding of vesicles from the Golgi membrane and may be directly involved in trafficking to lysosomes. In concert with the BLOC-1 complex, AP-3 is required to target cargos into vesicles assembled at cell bodies for delivery into neurites and nerve terminals. The protein is AP-3 complex subunit mu-2 (AP3M2) of Homo sapiens (Human).